The chain runs to 741 residues: MKTISILAFLVLARLIEANDLFQVKTIIDYQDLYLHINPNNFQVKLSHSSTDVFEFDESSNKLFCAGTNDIITYNKENCPYLMKFADESSSSVLGWSLDRQTLRFDHDLYFCGTKPPYSLLADPSGSANCRKLNIFRTVLEPKVEKEEEEEEYDGEEDDDDESLTEFESSTDFPTMTDESTEVEPSTTTESAISTTETSKDEESSTTVESTTTPKTTTTTSADSVTTTSKSNESLTTTESNESSTTTESKDSSTTTDESTPESSTTETDKTETTIEEQEEESTTSSQSEETEGPSGGNVDSTVAMVISAMFQGDRVYFYSDDKYITLLNGDLATFKIDDGYLQVNNNKWVNVNIERLLELVDNQEDATQGWIINDEGIFLVQDGFYSDSVSFSACGHDSGYRVYLGEENGCEPLNQFRIMNIEEDEIDETETTESTKTTETTKTTGPAETTDSAESTDDSNESSAPPPTEDPSDIPSATTTDEATVDPSDEQSIAPTSEPIDESTESEEPNESVTVTGDTTTDTSEQGLTTFTTETTATVTDCEDGDDSCTPRTTIRSTVITTHCPIVTKTEVETIVTDLTITLTTCIDETICEATTFVVSTTVVTTTLTTHSVVTEYVSSAHEGDGSSTIANEDKHNDAIVTPQETVAPDTNSPDADQEQPDSVEPDNETTDAPINVEDDATALISDEDTTTSTITTLIYITQSGDQPIKTPVPIFDNAANLAGSISLSSGVLLLILMLI.

Positions 1 to 18 (MKTISILAFLVLARLIEA) are cleaved as a signal peptide. Disordered stretches follow at residues 142 to 300 (PKVE…GNVD), 423 to 528 (EEDE…SEQG), and 646 to 681 (ETVAPDTNSPDADQEQPDSVEPDNETTDAPINVEDD). Over residues 147–165 (EEEEEEYDGEEDDDDESLT) the composition is skewed to acidic residues. Low complexity-rich tracts occupy residues 183–197 (VEPSTTTESAISTTE) and 205–266 (STTV…SSTT). 2 N-linked (GlcNAc...) asparagine glycosylation sites follow: asparagine 232 and asparagine 241. Residues 423 to 432 (EEDEIDETET) show a composition bias toward acidic residues. Positions 433-451 (TESTKTTETTKTTGPAETT) are enriched in low complexity. Residues asparagine 461 and asparagine 511 are each glycosylated (N-linked (GlcNAc...) asparagine). A compositionally biased stretch (acidic residues) spans 500–511 (PIDESTESEEPN). Residues 512–528 (ESVTVTGDTTTDTSEQG) show a composition bias toward low complexity. Over residues 646–656 (ETVAPDTNSPD) the composition is skewed to polar residues. A compositionally biased stretch (acidic residues) spans 657–671 (ADQEQPDSVEPDNET). A glycan (N-linked (GlcNAc...) asparagine) is linked at asparagine 669. Asparagine 719 is lipidated: GPI-anchor amidated asparagine. The propeptide at 720–741 (AANLAGSISLSSGVLLLILMLI) is removed in mature form.

Its subcellular location is the cell membrane. This is an uncharacterized protein from Candida albicans (strain SC5314 / ATCC MYA-2876) (Yeast).